The chain runs to 666 residues: Long-chain-fatty-acid--CoA ligase ACSBG2 (666 aa).

ATP contacts are provided by residues 230 to 238 (TSGTTGIPK), 418 to 423 (ELYGLS), Asp-496, and Arg-624.

This sequence belongs to the ATP-dependent AMP-binding enzyme family. Bubblegum subfamily. In terms of tissue distribution, testis-specific.

The protein resides in the cytoplasm. It is found in the membrane. The catalysed reaction is a long-chain fatty acid + ATP + CoA = a long-chain fatty acyl-CoA + AMP + diphosphate. It carries out the reaction (5Z,8Z,11Z,14Z)-eicosatetraenoate + ATP + CoA = (5Z,8Z,11Z,14Z)-eicosatetraenoyl-CoA + AMP + diphosphate. It catalyses the reaction hexadecanoate + ATP + CoA = hexadecanoyl-CoA + AMP + diphosphate. The enzyme catalyses (9Z)-octadecenoate + ATP + CoA = (9Z)-octadecenoyl-CoA + AMP + diphosphate. The catalysed reaction is (9Z,12Z)-octadecadienoate + ATP + CoA = (9Z,12Z)-octadecadienoyl-CoA + AMP + diphosphate. It carries out the reaction tetracosanoate + ATP + CoA = tetracosanoyl-CoA + AMP + diphosphate. Catalyzes the conversion of fatty acids such as long chain and very long-chain fatty acids to their active form acyl-CoAs for both synthesis of cellular lipids, and degradation via beta-oxidation. Can activate diverse saturated, monosaturated and polyunsaturated fatty acids. Has increased ability to activate oleic and linoleic acid. May play a role in spermatogenesis. The chain is Long-chain-fatty-acid--CoA ligase ACSBG2 from Homo sapiens (Human).